We begin with the raw amino-acid sequence, 248 residues long: Triosephosphate isomerase (248 aa).

Asparagine 11 and lysine 13 together coordinate substrate. The Electrophile role is filled by histidine 95. Residue glutamate 165 is the Proton acceptor of the active site.

The protein belongs to the triosephosphate isomerase family. In terms of assembly, homodimer.

It is found in the cytoplasm. It carries out the reaction dihydroxyacetone phosphate = methylglyoxal + phosphate. It catalyses the reaction D-glyceraldehyde 3-phosphate = dihydroxyacetone phosphate. The protein operates within carbohydrate degradation; glycolysis; D-glyceraldehyde 3-phosphate from glycerone phosphate: step 1/1. It functions in the pathway carbohydrate biosynthesis; gluconeogenesis. Functionally, triosephosphate isomerase is an extremely efficient metabolic enzyme that catalyzes the interconversion between dihydroxyacetone phosphate (DHAP) and D-glyceraldehyde-3-phosphate (G3P) in glycolysis and gluconeogenesis. In terms of biological role, it is also responsible for the non-negligible production of methylglyoxal a reactive cytotoxic side-product that modifies and can alter proteins, DNA and lipids. This chain is Triosephosphate isomerase (TPI1), found in Gallus gallus (Chicken).